The following is a 645-amino-acid chain: MDGTVTPSPTTTAMPPVSALDAGTPTLPPEAPLAMPEQNLREGSLQVRHQRTSPPGIGVRRFYLIGGTFATTAIAVWVMLSVLWPDGISVLEGCLLGLFVLLFAWIAMSFASAVAGFVTVVARAGRKLGIDPEQPLPTLRSRTALLMPTYNEDPRRLLAGLQAIYESVAETGQLEHFDFFVLSDTTREHIGRAEELVYNELCDRVDGHGRIFYRRRADNAARKAGNVADWVRRFGGSYPQMLILDADSVMTGDTIVRLVAGMENNPDVGLIQTLPAVVNGQTLFARMQQFGGRVYGPIIAFGVAWWHGAESNYWGHNAIIRTQAFADHAGLPSLRGRKPFGGHVLSHDFVEAALMRRGGWAMHMVPYLQGSYEEGPPTLTDLLIRDRRWCQGNLQHAKVVSAKGLHWISRMHMLIGIGHYFTAPMWGLLMLIGIGIPLAGGGIDLAGDLPFSPARYWHGSSQGNAIWIFICTMFVLLAPKLLGYIALLLNPRELRACGGAFRAAVSILLETVLAALMAPVVMYLQSRGVFEVLAGKDSGWDAQVRDDGKLSWPALFRSYGGLTVFGLFMGAVAYAVSPALAAWMGPVIVGMALSIPVVALTSLRRTGMALRRAGIFCIPEELDPPKVLVRASELRRAAALEPSLI.

Polar residues predominate over residues 1–13; the sequence is MDGTVTPSPTTTA. The disordered stretch occupies residues 1–32; that stretch reads MDGTVTPSPTTTAMPPVSALDAGTPTLPPEAP. The next 7 membrane-spanning stretches (helical) occupy residues 64-84, 98-118, 423-443, 465-485, 504-524, 559-579, and 580-600; these read LIGG…SVLW, LFVL…AGFV, APMW…GGGI, AIWI…LGYI, AVSI…VMYL, YGGL…VSPA, and LAAW…VVAL.

The protein belongs to the glycosyltransferase 2 family. OpgH subfamily.

It localises to the cell inner membrane. It functions in the pathway glycan metabolism; osmoregulated periplasmic glucan (OPG) biosynthesis. Functionally, involved in the biosynthesis of osmoregulated periplasmic glucans (OPGs). In Xanthomonas euvesicatoria pv. vesicatoria (strain 85-10) (Xanthomonas campestris pv. vesicatoria), this protein is Glucans biosynthesis glucosyltransferase H.